The sequence spans 92 residues: Small ribosomal subunit protein uS19 (92 aa).

The protein belongs to the universal ribosomal protein uS19 family.

Protein S19 forms a complex with S13 that binds strongly to the 16S ribosomal RNA. The sequence is that of Small ribosomal subunit protein uS19 from Sinorhizobium medicae (strain WSM419) (Ensifer medicae).